We begin with the raw amino-acid sequence, 235 residues long: Ornithine decarboxylase antizyme 3 (235 aa).

A phosphoserine mark is found at Ser-9 and Ser-12.

The protein belongs to the ODC antizyme family. In terms of assembly, interacts with ODC1 and thereby sterically blocks ODC homodimerization. Interacts with AZIN2; this interaction disrupts the interaction between the antizyme and ODC1. Interacts with GGN. Testis specific.

Its subcellular location is the nucleus. The protein resides in the cytoplasm. Its function is as follows. Ornithine decarboxylase (ODC) antizyme protein that negatively regulates ODC activity and intracellular polyamine biosynthesis and uptake in response to increased intracellular polyamine levels. Binds to ODC monomers, inhibiting the assembly of the functional ODC homodimers. Does not target the ODC monomers for degradation, which allows a protein synthesis-independent restoration of ODC activity. Stabilizes AZIN2 by interfering with its ubiquitination. Involved in the translocation of AZNI2 from ER-Golgi intermediate compartment (ERGIC) to the cytosol. Probably plays a key role in spermatogenesis by regulating the intracellular concentration of polyamines in haploid germ cells. The polypeptide is Ornithine decarboxylase antizyme 3 (OAZ3) (Homo sapiens (Human)).